The primary structure comprises 193 residues: MTIFAVFLLAIALSMDAFAVAVVSGCALQKPKVCHYVRLSAAFGFFQFAMPVIGWWLGVSVREYMEAWDHWIAFVLLGWIGGKMALSGLRALRNRESCACPSVDPTAGRNLVVLGVATSIDALAVGLSLAILGTPIWADAAIIGIVCAVITACGVYLGKTLANLCALNGWAELAGGLTLLAIACNILREHQVF.

Transmembrane regions (helical) follow at residues 3-23 (IFAV…VAVV), 41-61 (AAFG…GVSV), 69-89 (DHWI…LSGL), 107-127 (AGRN…AVGL), 130-150 (AILG…CAVI), and 164-184 (LCAL…AIAC).

It belongs to the MntP (TC 9.B.29) family.

It is found in the cell inner membrane. Probably functions as a manganese efflux pump. In Desulfovibrio desulfuricans (strain ATCC 27774 / DSM 6949 / MB), this protein is Putative manganese efflux pump MntP.